We begin with the raw amino-acid sequence, 760 residues long: MAPLLALFYLLQLGPGLAALFCNQNVNITGGNFTLSHGWAPGSLLIYSCPLGRYPSPAWRKCQSNGQWLTPRSSSHHTLRSSRMVKAVCKPVRCLAPSSFENGIYFPRLVSYPVGSNVSFECEQDFTLRGSPVRYCRPNGLWDGETAVCDNGASHCPNPGISVGTARTGLNFDLGDKVRYRCSSSNMVLTGSAERECQSNGVWSGSEPICRQPYSYDFPEDVASALDTSLTNLLGATNPTQNLLTKSLGRKIIIQRSGHLNLYLLLDASQSVTEKDFDIFKKSAELMVERIFSFEVNVSVAIITFASQPKTIMSILSERSQDVTEVITSLDSASYKDHENATGTNTYEVLIRVYSMMQSQMDRLGMETSAWKEIRHTIILLTDGKSNMGDSPKKAVTRIRELLSIEQNRDDYLDIYAIGVGKLDVDWKELNELGSKKDGERHAFILQDAKALQQIFEHMLDVSKLTDTICGVGNMSANASDQERTPWQVTFKPKSKETCQGSLISDQWVLTAAHCFHDIQMEDHHLWRVNVGDPTSQHGKEFLVEDVIIAPGFNVHAKRKQGISEFYADDIALLKLSRKVKMSTHARPICLPCTVGANMALRRSPGSTCKDHETELLSQQKVPAHFVALNGNRLNINLRTGPEWTRCIQAVSQNKNIFPSLTNVSEVVTDQFLCSGMEEEDDNPCKGESGGAVFLGRRYRFFQVGLVSWGLFDPCHGSSNKNLRKKPPRGVLPRDFHISLFRLQPWLRQHLDGVLDFLPL.

Residues 1–18 form the signal peptide; that stretch reads MAPLLALFYLLQLGPGLA. Sushi domains are found at residues 20–90, 92–151, and 154–212; these read LFCN…AVCK, VRCL…VCDN, and SHCP…ICRQ. Cystine bridges form between Cys22/Cys62, Cys49/Cys89, Cys94/Cys136, Cys122/Cys149, Cys156/Cys197, and Cys182/Cys210. 2 N-linked (GlcNAc...) asparagine glycosylation sites follow: Asn27 and Asn32. The N-linked (GlcNAc...) asparagine glycan is linked to Asn117. One can recognise a VWFA domain in the interval 261-459; that stretch reads NLYLLLDASQ…KALQQIFEHM (199 aa). An MIDAS-like motif motif is present at residues 267 to 271; the sequence is DASQS. Mg(2+) is bound by residues Ser269 and Ser271. Residues Asn297 and Asn340 are each glycosylated (N-linked (GlcNAc...) asparagine). Thr344 is a Mg(2+) binding site. 5 disulfides stabilise this stretch: Cys470/Cys590, Cys499/Cys515, Cys593/Cys609, Cys647/Cys674, and Cys685/Cys715. A Peptidase S1 domain is found at 471-752; it reads GVGNMSANAS…LQPWLRQHLD (282 aa). N-linked (GlcNAc...) asparagine glycosylation is found at Asn474 and Asn478. Catalysis depends on charge relay system residues His514 and Asp570. Residue Asn663 is glycosylated (N-linked (GlcNAc...) asparagine). Ser689 (charge relay system) is an active-site residue.

It belongs to the peptidase S1 family. As to quaternary structure, serine protease component of the C3 convertase, also named C4bC2b, composed of the serine protease complement C2b and complement C4b. Serine protease component of the C5 convertase, also named C4bC2bC3b, composed of the serine protease complement C2b, complement C3b, as well as complement C4b. Mg(2+) is required as a cofactor. Mn(2+) serves as cofactor. Cleaved and activated by different proteases depending on the complement pathway to generate complement C2a and serine protease complement C2b chains. Cleaved and activated by C1S following activation by the classical complement system. Cleaved and activated by MASP2 following activation by the lectin complement system. Cleaved and activated by GZMK following activation by the GZMK complement system.

The protein resides in the secreted. The protein localises to the cell surface. The catalysed reaction is Selective cleavage of Arg-|-Ser bond in complement component C3 alpha-chain to form C3a and C3b, and Arg-|-Xaa bond in complement component C5 alpha-chain to form C5a and C5b.. Its function is as follows. Precursor of the catalytic component of the C3 and C5 convertase complexes, which are part of the complement pathway, a cascade of proteins that leads to phagocytosis and breakdown of pathogens and signaling that strengthens the adaptive immune system. Component C2 is part of the classical, lectin and GZMK complement systems. Catalytic component of the complement C3 and C5 convertase complexes. Following complement activation, recruited to the surface of pathogens by complement C4b opsonin to form the C3 convertase, or C3b and C4b opsonins to form the C5 convertase. As part of the C3 convertase, cleaves and activate C3 into C3a anaphylatoxin and C3b opsonin, the next components of the complement pathways. As part of the C5 convertase, cleaves and activate C5 into C5a anaphylatoxin and C5b component of the membrane attack complex. The chain is Complement C2 from Mus musculus (Mouse).